Consider the following 319-residue polypeptide: Chromoplast-specific carotenoid-associated protein C2, chromoplastic (319 aa).

Residues 1–55 constitute a chromoplast transit peptide; that stretch reads MTSIAFCNAFTVNPFLAAARRSPPPLTPLTSVALSPARKPRILAIFHPRTFPSFR.

This sequence belongs to the PAP/fibrillin family.

It localises to the plastid. It is found in the chromoplast. Functionally, may be involved in carotenoid sequestration within chromoplasts. This is Chromoplast-specific carotenoid-associated protein C2, chromoplastic (CHRC2) from Oncidium hybrid cultivar (Orchid).